The primary structure comprises 1486 residues: Chromosome partition protein MukB (1486 aa).

34-41 (GGNGAGKS) lines the ATP pocket. 3 coiled-coil regions span residues 334–418 (SDHL…QYNQ), 444–480 (LETF…QAYQ), and 509–603 (RHLA…RAPV). The interval 666–783 (PGGSEDQRLN…EVPLFGRAAR (118 aa)) is flexible hinge. Coiled-coil stretches lie at residues 835–923 (EAEI…AKLE), 977–1115 (EMLS…TAKA), and 1209–1266 (VEAI…QNVS).

This sequence belongs to the SMC family. MukB subfamily. As to quaternary structure, homodimerization via its hinge domain. Binds to DNA via its C-terminal region. Interacts, and probably forms a ternary complex, with MukE and MukF via its C-terminal region. The complex formation is stimulated by calcium or magnesium. Interacts with tubulin-related protein FtsZ.

The protein localises to the cytoplasm. It is found in the nucleoid. Its function is as follows. Plays a central role in chromosome condensation, segregation and cell cycle progression. Functions as a homodimer, which is essential for chromosome partition. Involved in negative DNA supercoiling in vivo, and by this means organize and compact chromosomes. May achieve or facilitate chromosome segregation by condensation DNA from both sides of a centrally located replisome during cell division. This chain is Chromosome partition protein MukB, found in Shigella sonnei (strain Ss046).